The chain runs to 439 residues: Xylose isomerase (439 aa).

Catalysis depends on residues His103 and Asp106. Glu234, Glu270, His273, Asp298, Asp309, Asp311, and Asp341 together coordinate Mg(2+).

The protein belongs to the xylose isomerase family. Homotetramer. Requires Mg(2+) as cofactor.

The protein localises to the cytoplasm. It catalyses the reaction alpha-D-xylose = alpha-D-xylulofuranose. This Bacteroides fragilis (strain ATCC 25285 / DSM 2151 / CCUG 4856 / JCM 11019 / LMG 10263 / NCTC 9343 / Onslow / VPI 2553 / EN-2) protein is Xylose isomerase.